Consider the following 144-residue polypeptide: Universal stress protein F (144 aa).

It belongs to the universal stress protein A family. Homodimer.

The sequence is that of Universal stress protein F (uspF) from Escherichia coli (strain K12).